The following is a 195-amino-acid chain: Holliday junction branch migration complex subunit RuvA (195 aa).

A domain I region spans residues 1 to 66 (MNYLIFKVIY…LIIKDLYGFR (66 aa)). The domain II stretch occupies residues 67–141 (TYNERLLFID…KYINKVNDKN (75 aa)). Residue asparagine 141 is a region of interest, flexible linker. The tract at residues 141–195 (NNWAKELSIGLENLGYTKKDIEYAITKVKINSQQDIDISEIISSAIKEISLRHEN) is domain III.

This sequence belongs to the RuvA family. As to quaternary structure, homotetramer. Forms an RuvA(8)-RuvB(12)-Holliday junction (HJ) complex. HJ DNA is sandwiched between 2 RuvA tetramers; dsDNA enters through RuvA and exits via RuvB. An RuvB hexamer assembles on each DNA strand where it exits the tetramer. Each RuvB hexamer is contacted by two RuvA subunits (via domain III) on 2 adjacent RuvB subunits; this complex drives branch migration. In the full resolvosome a probable DNA-RuvA(4)-RuvB(12)-RuvC(2) complex forms which resolves the HJ.

Its subcellular location is the cytoplasm. In terms of biological role, the RuvA-RuvB-RuvC complex processes Holliday junction (HJ) DNA during genetic recombination and DNA repair, while the RuvA-RuvB complex plays an important role in the rescue of blocked DNA replication forks via replication fork reversal (RFR). RuvA specifically binds to HJ cruciform DNA, conferring on it an open structure. The RuvB hexamer acts as an ATP-dependent pump, pulling dsDNA into and through the RuvAB complex. HJ branch migration allows RuvC to scan DNA until it finds its consensus sequence, where it cleaves and resolves the cruciform DNA. The protein is Holliday junction branch migration complex subunit RuvA of Ureaplasma parvum serovar 3 (strain ATCC 27815 / 27 / NCTC 11736).